The following is a 147-amino-acid chain: Deoxyuridine 5'-triphosphate nucleotidohydrolase (147 aa).

Residues Arg63–Gly65, Asn76, and Thr80–Asp82 contribute to the substrate site.

The protein belongs to the dUTPase family. Mg(2+) serves as cofactor.

It catalyses the reaction dUTP + H2O = dUMP + diphosphate + H(+). The protein operates within pyrimidine metabolism; dUMP biosynthesis; dUMP from dCTP (dUTP route): step 2/2. In terms of biological role, this enzyme is involved in nucleotide metabolism: it produces dUMP, the immediate precursor of thymidine nucleotides and it decreases the intracellular concentration of dUTP so that uracil cannot be incorporated into DNA. The sequence is that of Deoxyuridine 5'-triphosphate nucleotidohydrolase from Chlamydia abortus (strain DSM 27085 / S26/3) (Chlamydophila abortus).